A 643-amino-acid chain; its full sequence is Type VI secretion system spike protein VgrG1a (643 aa).

This sequence belongs to the VgrG protein family. As to quaternary structure, forms homotrimers. Part of the type VI secretion system (T6SS). Interacts with EagT6 and Tse6; these interactions are required for Tse6 loading onto VgrG1. Interacts with Hcp1.

Its subcellular location is the secreted. Part of the H1 type VI secretion system (H1-T6SS) specialized secretion system, which delivers several virulence factors in both prokaryotic and eukaryotic cells during infection. Forms the spike at the tip of the elongating tube formed by haemolysin co-regulated protein 1/Hcp1. Allows the delivery of the Tse6 toxin to target cells where it exerts its toxicity. This is Type VI secretion system spike protein VgrG1a from Pseudomonas aeruginosa (strain ATCC 15692 / DSM 22644 / CIP 104116 / JCM 14847 / LMG 12228 / 1C / PRS 101 / PAO1).